Here is a 118-residue protein sequence, read N- to C-terminus: Large ribosomal subunit protein uL18 (118 aa).

Positions 1-26 are disordered; that stretch reads MISKPDKNKIRQKRHRRVRGKLSGTA. Residues 10-20 are compositionally biased toward basic residues; it reads IRQKRHRRVRG.

Belongs to the universal ribosomal protein uL18 family. In terms of assembly, part of the 50S ribosomal subunit; part of the 5S rRNA/L5/L18/L25 subcomplex. Contacts the 5S and 23S rRNAs.

In terms of biological role, this is one of the proteins that bind and probably mediate the attachment of the 5S RNA into the large ribosomal subunit, where it forms part of the central protuberance. The chain is Large ribosomal subunit protein uL18 from Streptococcus equi subsp. zooepidemicus (strain H70).